Here is a 455-residue protein sequence, read N- to C-terminus: Tubulin alpha chain (455 aa).

Gln11, Glu77, Ser145, Gly149, Thr150, Ser184, Asn211, and Asn233 together coordinate GTP. Glu77 contacts Mg(2+). The active site involves Glu259.

It belongs to the tubulin family. In terms of assembly, dimer of alpha and beta chains. A typical microtubule is a hollow water-filled tube with an outer diameter of 25 nm and an inner diameter of 15 nM. Alpha-beta heterodimers associate head-to-tail to form protofilaments running lengthwise along the microtubule wall with the beta-tubulin subunit facing the microtubule plus end conferring a structural polarity. Microtubules usually have 13 protofilaments but different protofilament numbers can be found in some organisms and specialized cells. Requires Mg(2+) as cofactor.

It is found in the cytoplasm. The protein resides in the cytoskeleton. The catalysed reaction is GTP + H2O = GDP + phosphate + H(+). Functionally, tubulin is the major constituent of microtubules, a cylinder consisting of laterally associated linear protofilaments composed of alpha- and beta-tubulin heterodimers. Microtubules grow by the addition of GTP-tubulin dimers to the microtubule end, where a stabilizing cap forms. Below the cap, tubulin dimers are in GDP-bound state, owing to GTPase activity of alpha-tubulin. The chain is Tubulin alpha chain from Entamoeba histolytica (strain ATCC 30459 / HM-1:IMSS / ABRM).